A 149-amino-acid chain; its full sequence is Transcriptional repressor NrdR (149 aa).

The segment at 3-34 (CPFCNADDTKVIDSRLVADGHQVRRRRECLVC) is a zinc-finger region. Residues 49–139 (PRVIKSNGVR…VYRSFEDIRE (91 aa)) enclose the ATP-cone domain.

The protein belongs to the NrdR family. Zn(2+) serves as cofactor.

Negatively regulates transcription of bacterial ribonucleotide reductase nrd genes and operons by binding to NrdR-boxes. This chain is Transcriptional repressor NrdR, found in Tolumonas auensis (strain DSM 9187 / NBRC 110442 / TA 4).